Consider the following 263-residue polypeptide: ATP synthase subunit a (263 aa).

A run of 6 helical transmembrane segments spans residues 26–46, 86–106, 130–150, 166–186, 195–215, and 229–249; these read VHLD…FFFS, VAPL…IDLI, DISA…FYTI, PFNH…TLLA, LFGN…MYMA, and LAWA…FMML.

It belongs to the ATPase A chain family. In terms of assembly, F-type ATPases have 2 components, CF(1) - the catalytic core - and CF(0) - the membrane proton channel. CF(1) has five subunits: alpha(3), beta(3), gamma(1), delta(1), epsilon(1). CF(0) has three main subunits: a(1), b(2) and c(9-12). The alpha and beta chains form an alternating ring which encloses part of the gamma chain. CF(1) is attached to CF(0) by a central stalk formed by the gamma and epsilon chains, while a peripheral stalk is formed by the delta and b chains.

The protein localises to the cell inner membrane. Key component of the proton channel; it plays a direct role in the translocation of protons across the membrane. This is ATP synthase subunit a from Glaesserella parasuis serovar 5 (strain SH0165) (Haemophilus parasuis).